A 119-amino-acid polypeptide reads, in one-letter code: Large ribosomal subunit protein bL20 (119 aa).

This sequence belongs to the bacterial ribosomal protein bL20 family.

Its function is as follows. Binds directly to 23S ribosomal RNA and is necessary for the in vitro assembly process of the 50S ribosomal subunit. It is not involved in the protein synthesizing functions of that subunit. The polypeptide is Large ribosomal subunit protein bL20 (Colwellia psychrerythraea (strain 34H / ATCC BAA-681) (Vibrio psychroerythus)).